A 231-amino-acid chain; its full sequence is Flagellar L-ring protein (231 aa).

An N-terminal signal peptide occupies residues 1-18; the sequence is MKHLLSVFALGGAVLLAG. A lipid anchor (N-palmitoyl cysteine) is attached at Cys-19. Cys-19 carries the S-diacylglycerol cysteine lipid modification.

It belongs to the FlgH family. In terms of assembly, the basal body constitutes a major portion of the flagellar organelle and consists of four rings (L,P,S, and M) mounted on a central rod.

The protein resides in the cell outer membrane. The protein localises to the bacterial flagellum basal body. Functionally, assembles around the rod to form the L-ring and probably protects the motor/basal body from shearing forces during rotation. The chain is Flagellar L-ring protein from Pseudomonas entomophila (strain L48).